The sequence spans 338 residues: Mitochondrial E3 ubiquitin protein ligase 1 (338 aa).

At 1-3 (MEF) the chain is on the cytoplasmic side. Residues 4-24 (LHESVALGVDLLILGLCAREY) traverse the membrane as a helical segment. The Mitochondrial intermembrane segment spans residues 25–227 (VHYKRTAKVL…LIKRFEDAKT (203 aa)). The helical transmembrane segment at 228 to 248 (TTILKLVVCSTISAILVAFIA) threads the bilayer. Topologically, residues 249-338 (KKLYRKRKQE…IVSKAAAFIA (90 aa)) are cytoplasmic. The segment at 290 to 326 (CVVCSTNPKEIILLPCGHVCLCEDCAQKISVTCPVCR) adopts an RING-type zinc-finger fold.

In terms of assembly, interacts with Marf. In terms of processing, auto-ubiquitinated.

The protein localises to the mitochondrion outer membrane. It catalyses the reaction S-ubiquitinyl-[E2 ubiquitin-conjugating enzyme]-L-cysteine + [acceptor protein]-L-lysine = [E2 ubiquitin-conjugating enzyme]-L-cysteine + N(6)-ubiquitinyl-[acceptor protein]-L-lysine.. Its function is as follows. Exhibits weak E3 ubiquitin-protein ligase activity. E3 ubiquitin ligases accept ubiquitin from an E2 ubiquitin-conjugating enzyme in the form of a thioester and then directly transfer the ubiquitin to targeted substrates. Plays a role in the control of mitochondrial morphology by promoting mitochondrial fission. Negatively regulates the mitochondrial fusion protein marf by promoting its ubiquitination, acting in a pathway that is parallel to the park/pink1 regulatory pathway. The sequence is that of Mitochondrial E3 ubiquitin protein ligase 1 from Drosophila melanogaster (Fruit fly).